A 309-amino-acid chain; its full sequence is 2-oxoacid:ferredoxin oxidoreductase 2, subunit beta (309 aa).

3 residues coordinate [4Fe-4S] cluster: Cys17, Cys20, and Cys51. Thiamine diphosphate-binding positions include 49–52 (IGCS) and His68. Residue Asp93 participates in Mg(2+) binding. Residue 94-95 (GD) participates in thiamine diphosphate binding. Positions 121 and 123 each coordinate Mg(2+). 125–126 (GL) contributes to the thiamine diphosphate binding site. Cys200 lines the [4Fe-4S] cluster pocket.

In terms of assembly, heterodimer composed of an alpha and a beta subunit. It depends on [4Fe-4S] cluster as a cofactor. The cofactor is thiamine diphosphate. Mg(2+) is required as a cofactor.

It catalyses the reaction a 2-oxocarboxylate + 2 oxidized [2Fe-2S]-[ferredoxin] + CoA = an acyl-CoA + 2 reduced [2Fe-2S]-[ferredoxin] + CO2 + H(+). Its function is as follows. Catalyzes the coenzyme A-dependent oxidative decarboxylation of different 2-oxoacids such as pyruvate, 2-oxobutyrate, glyoxylate and 2-oxoglutarate to form their CoA derivatives. The chain is 2-oxoacid:ferredoxin oxidoreductase 2, subunit beta from Aeropyrum pernix (strain ATCC 700893 / DSM 11879 / JCM 9820 / NBRC 100138 / K1).